The chain runs to 389 residues: Agamous-like MADS-box protein AGL65 (389 aa).

Residues 1–61 (MGRVKLKIKR…GRATAFHGEH (61 aa)) enclose the MADS-box domain. Coiled-coil stretches lie at residues 77–131 (QERT…LMEC) and 293–325 (GMEEDQEKKIKSEMELNNLQQQQQQQQQQQQQD). Residues 310–343 (NLQQQQQQQQQQQQQDPSMYDPMANNNGGCFQIP) form a disordered region. The span at 312–324 (QQQQQQQQQQQQQ) shows a compositional bias: low complexity.

Forms a heterodimer with AGL104. As to expression, expressed in pollen.

It is found in the nucleus. Probable transcription factor that forms a heterodimer with the MADS-box protein AGL104 and is involved in the regulation of pollen maturation at the late stages of pollen development and pollen tube growth. The protein is Agamous-like MADS-box protein AGL65 of Arabidopsis thaliana (Mouse-ear cress).